Reading from the N-terminus, the 210-residue chain is Na(+)-translocating NADH-quinone reductase subunit D (210 aa).

6 helical membrane passes run 14-34 (PIIN…ALAV), 42-62 (LVMS…ISLI), 72-92 (IIVQ…VLQA), 96-116 (EIAK…IVMG), 131-151 (FMDG…VGFF), and 178-198 (NGLL…IWVI).

Belongs to the NqrDE/RnfAE family. As to quaternary structure, composed of six subunits; NqrA, NqrB, NqrC, NqrD, NqrE and NqrF.

The protein localises to the cell inner membrane. The catalysed reaction is a ubiquinone + n Na(+)(in) + NADH + H(+) = a ubiquinol + n Na(+)(out) + NAD(+). Functionally, NQR complex catalyzes the reduction of ubiquinone-1 to ubiquinol by two successive reactions, coupled with the transport of Na(+) ions from the cytoplasm to the periplasm. NqrA to NqrE are probably involved in the second step, the conversion of ubisemiquinone to ubiquinol. This chain is Na(+)-translocating NADH-quinone reductase subunit D, found in Shewanella denitrificans (strain OS217 / ATCC BAA-1090 / DSM 15013).